Consider the following 497-residue polypeptide: Delayed-rectifier potassium channel regulatory subunit KCNS1 (497 aa).

The Cytoplasmic segment spans residues Met-1–Leu-186. The chain crosses the membrane as a helical span at residues Pro-187 to Ile-208. Residues His-209–Pro-239 are Extracellular-facing. The helical transmembrane segment at Val-240–Leu-262 threads the bilayer. The Cytoplasmic segment spans residues Ala-263–Pro-273. A helical membrane pass occupies residues Leu-274 to Ala-291. Over Gly-292 to Leu-309 the chain is Extracellular. The chain crosses the membrane as a helical; Voltage-sensor span at residues Gly-310 to His-330. Over Ser-331–Tyr-345 the chain is Cytoplasmic. The chain crosses the membrane as a helical span at residues Arg-346–Tyr-367. Topologically, residues Thr-368–Ile-379 are extracellular. Positions Pro-380 to Thr-391 form an intramembrane region, helical. A Selectivity filter motif is present at residues Thr-392–Asp-397. The stretch at Thr-392 to Val-399 is an intramembrane region. The Extracellular segment spans residues Pro-400–Lys-406. A helical membrane pass occupies residues Leu-407–Tyr-435. Topologically, residues Arg-436–Tyr-497 are cytoplasmic. The tract at residues Ser-464 to Tyr-497 is disordered. Over residues Thr-470–Asp-482 the composition is skewed to basic and acidic residues.

It belongs to the potassium channel family. S (TC 1.A.1.2) subfamily. Kv9.1/KCNS1 sub-subfamily. In terms of assembly, heterotetramer with KCNB1 and KCNB2. Does not form homomultimers. In terms of tissue distribution, detected in brain, but not in the other tissues tested. The highest levels of expression are in olfactory bulb, cerebral cortex, hippocampus, habenula, basolateral amygdaloid nuclei and cerebellum.

It is found in the cell membrane. Functionally, potassium channel regulatory subunit that modulate the delayed rectifier voltage-gated potassium channel activity of KCNB1 and KCNB2 by altering their kinetics, expression levels, and shifting the half-inactivation potential to more polarized values. While it does not form functional channels on its own, it can form functional heterotetrameric channels with KCNB1 and KCNB2. Each regulatory subunit has unique regulatory properties that can lead to extensive inhibition, significant changes in kinetics, and/or substantial shifts in the voltage dependencies of the inactivation process. The protein is Delayed-rectifier potassium channel regulatory subunit KCNS1 of Mus musculus (Mouse).